The primary structure comprises 502 residues: Lysine--tRNA ligase (502 aa).

Mg(2+) contacts are provided by glutamate 398 and glutamate 405.

The protein belongs to the class-II aminoacyl-tRNA synthetase family. Homodimer. Requires Mg(2+) as cofactor.

Its subcellular location is the cytoplasm. The catalysed reaction is tRNA(Lys) + L-lysine + ATP = L-lysyl-tRNA(Lys) + AMP + diphosphate. In Thermosipho africanus (strain TCF52B), this protein is Lysine--tRNA ligase.